A 331-amino-acid chain; its full sequence is Phenylalanine--tRNA ligase alpha subunit (331 aa).

A Mg(2+)-binding site is contributed by Glu-252.

This sequence belongs to the class-II aminoacyl-tRNA synthetase family. Phe-tRNA synthetase alpha subunit type 1 subfamily. As to quaternary structure, tetramer of two alpha and two beta subunits. Mg(2+) is required as a cofactor.

The protein resides in the cytoplasm. The catalysed reaction is tRNA(Phe) + L-phenylalanine + ATP = L-phenylalanyl-tRNA(Phe) + AMP + diphosphate + H(+). In Stenotrophomonas maltophilia (strain R551-3), this protein is Phenylalanine--tRNA ligase alpha subunit.